A 504-amino-acid chain; its full sequence is Histidine ammonia-lyase (504 aa).

The segment at residues 142–144 (ASG) is a cross-link (5-imidazolinone (Ala-Gly)). The residue at position 143 (S143) is a 2,3-didehydroalanine (Ser).

This sequence belongs to the PAL/histidase family. Contains an active site 4-methylidene-imidazol-5-one (MIO), which is formed autocatalytically by cyclization and dehydration of residues Ala-Ser-Gly.

The protein localises to the cytoplasm. It carries out the reaction L-histidine = trans-urocanate + NH4(+). It participates in amino-acid degradation; L-histidine degradation into L-glutamate; N-formimidoyl-L-glutamate from L-histidine: step 1/3. This chain is Histidine ammonia-lyase, found in Staphylococcus aureus (strain MRSA252).